The following is a 440-amino-acid chain: Chromosomal replication initiator protein DnaA (440 aa).

Residues 1 to 69 (MKERILQEIK…VKVVLGNDAT (69 aa)) form a domain I, interacts with DnaA modulators region. The tract at residues 69–96 (TFEITYEAFEPHSSYSEPLVKKRAVLLT) is domain II. Positions 97–313 (PLNPDYTFEN…GAIIKLLVYK (217 aa)) are domain III, AAA+ region. ATP-binding residues include G140, G142, K143, and T144. The domain IV, binds dsDNA stretch occupies residues 314–440 (ETTGKEVDLK…GEISRRALSG (127 aa)).

Belongs to the DnaA family. In terms of assembly, oligomerizes as a right-handed, spiral filament on DNA at oriC.

Its subcellular location is the cytoplasm. Its function is as follows. Plays an essential role in the initiation and regulation of chromosomal replication. ATP-DnaA binds to the origin of replication (oriC) to initiate formation of the DNA replication initiation complex once per cell cycle. Binds the DnaA box (a 9 base pair repeat at the origin) and separates the double-stranded (ds)DNA. Forms a right-handed helical filament on oriC DNA; dsDNA binds to the exterior of the filament while single-stranded (ss)DNA is stabiized in the filament's interior. The ATP-DnaA-oriC complex binds and stabilizes one strand of the AT-rich DNA unwinding element (DUE), permitting loading of DNA polymerase. After initiation quickly degrades to an ADP-DnaA complex that is not apt for DNA replication. Binds acidic phospholipids. In Thermotoga sp. (strain RQ2), this protein is Chromosomal replication initiator protein DnaA.